The following is a 213-amino-acid chain: UPF0056 membrane protein AF_2111 (213 aa).

The next 6 helical transmembrane spans lie at Met-1–Ile-21, Ile-51–Phe-71, Ile-75–Leu-95, Val-118–Leu-138, Ala-142–Val-162, and Ala-181–Phe-201.

Belongs to the UPF0056 (MarC) family.

It is found in the cell membrane. The protein is UPF0056 membrane protein AF_2111 of Archaeoglobus fulgidus (strain ATCC 49558 / DSM 4304 / JCM 9628 / NBRC 100126 / VC-16).